Reading from the N-terminus, the 159-residue chain is UPF0262 protein Dshi_0980 (159 aa).

This sequence belongs to the UPF0262 family.

This Dinoroseobacter shibae (strain DSM 16493 / NCIMB 14021 / DFL 12) protein is UPF0262 protein Dshi_0980.